The following is a 1193-amino-acid chain: Magnesium-chelatase subunit H (1193 aa).

It belongs to the Mg-chelatase subunit H family.

The enzyme catalyses protoporphyrin IX + Mg(2+) + ATP + H2O = Mg-protoporphyrin IX + ADP + phosphate + 3 H(+). Its pathway is porphyrin-containing compound metabolism; bacteriochlorophyll biosynthesis (light-independent). Functionally, involved in bacteriochlorophyll pigment biosynthesis; introduces a magnesium ion into protoporphyrin IX to yield Mg-protoroporphyrin IX. This chain is Magnesium-chelatase subunit H (bchH), found in Cereibacter sphaeroides (strain ATCC 17023 / DSM 158 / JCM 6121 / CCUG 31486 / LMG 2827 / NBRC 12203 / NCIMB 8253 / ATH 2.4.1.) (Rhodobacter sphaeroides).